Here is a 215-residue protein sequence, read N- to C-terminus: uncharacterized protein (215 aa).

The protein to T.pallidum TP_0127, TP_0618 and TP_0619.

This is an uncharacterized protein from Treponema pallidum (strain Nichols).